The chain runs to 195 residues: Thymidylate kinase (195 aa).

Residue 7–14 (GVDTCGKS) participates in ATP binding.

This sequence belongs to the thymidylate kinase family.

The catalysed reaction is dTMP + ATP = dTDP + ADP. Functionally, phosphorylation of dTMP to form dTDP in both de novo and salvage pathways of dTTP synthesis. This is Thymidylate kinase from Helicobacter hepaticus (strain ATCC 51449 / 3B1).